Reading from the N-terminus, the 464-residue chain is Olfactomedin (464 aa).

A signal peptide spans 1 to 16; that stretch reads MYICLLTLVLIHAAAA. 6 N-linked (GlcNAc...) asparagine glycosylation sites follow: Asn-21, Asn-85, Asn-143, Asn-228, Asn-279, and Asn-383. One can recognise an Olfactomedin-like domain in the interval 192 to 464; it reads SCQHQGLAHI…LLHYDIALKP (273 aa). Residues Cys-193 and Cys-394 are joined by a disulfide bond.

In terms of assembly, oligomer; disulfide-linked. Post-translationally, most, if not all, of the six potential sites for N-glycosylation carry carbohydrate moieties of 8-10 sugar residues. In terms of tissue distribution, expressed exclusively in olfactory neuroepithelium.

It localises to the secreted. The protein localises to the extracellular space. May influence the maintenance, growth, or differentiation of chemosensory cilia on the apical dendrites of olfactory neurons. Major component of the extracellular matrix of the olfactory neuroepithelium. The sequence is that of Olfactomedin from Aquarana catesbeiana (American bullfrog).